The chain runs to 300 residues: 33 kDa chaperonin (300 aa).

2 cysteine pairs are disulfide-bonded: Cys247–Cys249 and Cys280–Cys283.

Belongs to the HSP33 family. Post-translationally, under oxidizing conditions two disulfide bonds are formed involving the reactive cysteines. Under reducing conditions zinc is bound to the reactive cysteines and the protein is inactive.

Its subcellular location is the cytoplasm. Its function is as follows. Redox regulated molecular chaperone. Protects both thermally unfolding and oxidatively damaged proteins from irreversible aggregation. Plays an important role in the bacterial defense system toward oxidative stress. The polypeptide is 33 kDa chaperonin (Prochlorococcus marinus (strain MIT 9312)).